The sequence spans 734 residues: MTRALILVAICLMLTLNNAAETKVHIVYLGEKQHDDPDSVTESHHQMLWSILGSKEAAHDSMTPWLLSFRSQTNQFPSESTLRFYELQTTRTWDYLQHTSKHPKNILNQTNMGDQLIIGVVDSVTLNWFGFILLKQEYGQSLNHSVTMVLDQYQNVGKEVQLGHAENPEYISPRDFDGHGTHVAATAAGSFVPDTNYLGLGRGTARGGAPRARIAMYKACWHLVTGATTCSAADLVKAIDEAIHDGVDVLSISNGFSVPLFPEVDTQDGVAVGAFHAVAKGIPVVCAGGNAGPSSQTISNTAPWIITVAATTQDRSFPTFITLGNNVTVVGQALYQGPDIDFTELVYPEDSGASNETFYGVCEDLAKNPAHIIEEKIVLCFTKSTSYSTMIQAASDVVKLDGYGVIVARNPGHQLSPCFGFPCLAVDYELGTDILFYIRSTRSPVAKIQPTRTLVGLPVATKVATFSSRGPNSISPAILKPDIAAPGVNILAATSPNDTFYDKGFAMKSGTSMSAPVVAGIVALLKSVHPHWSPAAIRSAIVTTAWRTDPSGEPIFADGSNRKLADPFDYGGGVVNSEKAANPGLVYDMGVKDYILYLCSVGYTDSSITGLVSKKTVCANPKPSVLDLNLPSITIPNLAKEVTITRTVTNVGPVGSVYKPVIEAPMGVNVTVTPSTLVFNAYTRKLSFKVRVLTNHIVNTGYYFGSLTWTDSVHNVVIPVSVRTQIMQRYYDEN.

Positions 1–19 (MTRALILVAICLMLTLNNA) are cleaved as a signal peptide. Positions 20–88 (AETKVHIVYL…ESTLRFYELQ (69 aa)) are cleaved as a propeptide — activation peptide. A Peptidase S8 domain is found at 92-581 (TWDYLQHTSK…GGVVNSEKAA (490 aa)). The N-linked (GlcNAc...) asparagine glycan is linked to Asn108. Asp122 acts as the Charge relay system in catalysis. A glycan (N-linked (GlcNAc...) asparagine) is linked at Asn143. The active-site Charge relay system is the His179. N-linked (GlcNAc...) asparagine glycans are attached at residues Asn326 and Asn355. Positions 361–438 (VCEDLAKNPA…ELGTDILFYI (78 aa)) constitute a PA domain. N-linked (GlcNAc...) asparagine glycosylation occurs at Asn497. Ser512 acts as the Charge relay system in catalysis. Asn669 carries an N-linked (GlcNAc...) asparagine glycan.

Belongs to the peptidase S8 family.

The protein resides in the secreted. The sequence is that of Subtilisin-like protease SBT3.2 from Arabidopsis thaliana (Mouse-ear cress).